We begin with the raw amino-acid sequence, 513 residues long: ATP synthase subunit alpha (513 aa).

169-176 is a binding site for ATP; that stretch reads GDRQTGKT.

It belongs to the ATPase alpha/beta chains family. As to quaternary structure, F-type ATPases have 2 components, CF(1) - the catalytic core - and CF(0) - the membrane proton channel. CF(1) has five subunits: alpha(3), beta(3), gamma(1), delta(1), epsilon(1). CF(0) has three main subunits: a(1), b(2) and c(9-12). The alpha and beta chains form an alternating ring which encloses part of the gamma chain. CF(1) is attached to CF(0) by a central stalk formed by the gamma and epsilon chains, while a peripheral stalk is formed by the delta and b chains.

It localises to the cell inner membrane. It carries out the reaction ATP + H2O + 4 H(+)(in) = ADP + phosphate + 5 H(+)(out). Its function is as follows. Produces ATP from ADP in the presence of a proton gradient across the membrane. The alpha chain is a regulatory subunit. The chain is ATP synthase subunit alpha from Actinobacillus pleuropneumoniae serotype 3 (strain JL03).